The following is a 1068-amino-acid chain: Carbamoyl phosphate synthase large chain (1068 aa).

Positions 1–401 are carboxyphosphate synthetic domain; that stretch reads MPLNKDIKKV…AFLKGIRSLE (401 aa). ATP-binding residues include R129, R169, G175, G176, K208, V210, E215, G241, I242, H243, Q284, and E298. In terms of domain architecture, ATP-grasp 1 spans 133-327; that stretch reads RNVMSRINEP…IAKVAAKIAL (195 aa). Q284, E298, and N300 together coordinate Mg(2+). Mn(2+) contacts are provided by Q284, E298, and N300. Residues 402–549 form an oligomerization domain region; sequence IGKYSLEHKK…YSTYDVYDEV (148 aa). The interval 550–932 is carbamoyl phosphate synthetic domain; it reads EVSKNKKVIV…ALYKGFIGAN (383 aa). Positions 674–864 constitute an ATP-grasp 2 domain; sequence DELLEKLQIS…IVDIATRVML (191 aa). Residues R710, K749, L751, E755, G780, V781, H782, S783, Q823, and E835 each contribute to the ATP site. Positions 823, 835, and 837 each coordinate Mg(2+). Mn(2+)-binding residues include Q823, E835, and N837. An MGS-like domain is found at 933–1068; the sequence is MSIKKEKGTI…ETLHIFDLSN (136 aa). The interval 933–1068 is allosteric domain; sequence MSIKKEKGTI…ETLHIFDLSN (136 aa).

The protein belongs to the CarB family. Composed of two chains; the small (or glutamine) chain promotes the hydrolysis of glutamine to ammonia, which is used by the large (or ammonia) chain to synthesize carbamoyl phosphate. Tetramer of heterodimers (alpha,beta)4. Mg(2+) serves as cofactor. It depends on Mn(2+) as a cofactor.

It catalyses the reaction hydrogencarbonate + L-glutamine + 2 ATP + H2O = carbamoyl phosphate + L-glutamate + 2 ADP + phosphate + 2 H(+). The catalysed reaction is hydrogencarbonate + NH4(+) + 2 ATP = carbamoyl phosphate + 2 ADP + phosphate + 2 H(+). The protein operates within amino-acid biosynthesis; L-arginine biosynthesis; carbamoyl phosphate from bicarbonate: step 1/1. Its pathway is pyrimidine metabolism; UMP biosynthesis via de novo pathway; (S)-dihydroorotate from bicarbonate: step 1/3. Large subunit of the glutamine-dependent carbamoyl phosphate synthetase (CPSase). CPSase catalyzes the formation of carbamoyl phosphate from the ammonia moiety of glutamine, carbonate, and phosphate donated by ATP, constituting the first step of 2 biosynthetic pathways, one leading to arginine and/or urea and the other to pyrimidine nucleotides. The large subunit (synthetase) binds the substrates ammonia (free or transferred from glutamine from the small subunit), hydrogencarbonate and ATP and carries out an ATP-coupled ligase reaction, activating hydrogencarbonate by forming carboxy phosphate which reacts with ammonia to form carbamoyl phosphate. This is Carbamoyl phosphate synthase large chain from Clostridium botulinum (strain Loch Maree / Type A3).